The sequence spans 928 residues: Probable outer membrane protein pmp10 (928 aa).

The signal sequence occupies residues 1-25 (MKSQFSWLVLSSTLACFTSCSTVFA). Positions 635–928 (TLCSDRGFWA…NVDLGGKFQF (294 aa)) constitute an Autotransporter domain.

This sequence belongs to the PMP outer membrane protein family.

The protein localises to the secreted. It localises to the cell wall. Its subcellular location is the cell outer membrane. In Chlamydia pneumoniae (Chlamydophila pneumoniae), this protein is Probable outer membrane protein pmp10 (pmp10).